A 454-amino-acid polypeptide reads, in one-letter code: Lipase member H (454 aa).

An N-terminal signal peptide occupies residues 1–23 (MIYRKIIWGILYVTLMLFDTHRA). Asn-73, Asn-137, and Asn-151 each carry an N-linked (GlcNAc...) asparagine glycan. Ser-161 (nucleophile) is an active-site residue. Residue Asp-185 is the Charge relay system of the active site. Cys-240 and Cys-253 are oxidised to a cystine. Residue His-255 is the Charge relay system of the active site. N-linked (GlcNAc...) asparagine glycosylation is present at Asn-267. 2 cysteine pairs are disulfide-bonded: Cys-277–Cys-288 and Cys-291–Cys-299. The N-linked (GlcNAc...) asparagine glycan is linked to Asn-358. Cysteines 430 and 449 form a disulfide.

The protein belongs to the AB hydrolase superfamily. Lipase family.

The protein resides in the secreted. The protein localises to the cell membrane. The catalysed reaction is 1-hexadecanoyl-2-(9Z-octadecenoyl)-sn-glycero-3-phosphate + H2O = 2-(9Z-octadecenoyl)-sn-glycero-3-phosphate + hexadecanoate + H(+). In terms of biological role, hydrolyzes specifically phosphatidic acid (PA) to produce 2-acyl lysophosphatidic acid (LPA; a potent bioactive lipid mediator) and fatty acid. Does not hydrolyze other phospholipids, like phosphatidylserine (PS), phosphatidylcholine (PC) and phosphatidylethanolamine (PE) or triacylglycerol (TG). The sequence is that of Lipase member H (liph) from Danio rerio (Zebrafish).